The chain runs to 603 residues: Arginine--tRNA ligase (603 aa).

A 'HIGH' region motif is present at residues Pro143 to His153.

This sequence belongs to the class-I aminoacyl-tRNA synthetase family. Monomer.

It localises to the cytoplasm. The enzyme catalyses tRNA(Arg) + L-arginine + ATP = L-arginyl-tRNA(Arg) + AMP + diphosphate. The protein is Arginine--tRNA ligase of Prochlorococcus marinus (strain SARG / CCMP1375 / SS120).